The primary structure comprises 437 residues: Lipid II isoglutaminyl synthase (glutamine-hydrolyzing) subunit MurT (437 aa).

Positions 202, 205, 224, and 226 each coordinate Zn(2+). Asp-349 is an active-site residue.

This sequence belongs to the MurCDEF family. MurT subfamily. In terms of assembly, forms a heterodimer with GatD.

The catalysed reaction is beta-D-GlcNAc-(1-&gt;4)-Mur2Ac(oyl-L-Ala-gamma-D-Glu-L-Lys-D-Ala-D-Ala)-di-trans,octa-cis-undecaprenyl diphosphate + L-glutamine + ATP + H2O = beta-D-GlcNAc-(1-&gt;4)-Mur2Ac(oyl-L-Ala-D-isoglutaminyl-L-Lys-D-Ala-D-Ala)-di-trans,octa-cis-undecaprenyl diphosphate + L-glutamate + ADP + phosphate + H(+). It catalyses the reaction beta-D-GlcNAc-(1-&gt;4)-Mur2Ac(oyl-L-Ala-gamma-D-Glu-L-Lys-D-Ala-D-Ala)-di-trans,octa-cis-undecaprenyl diphosphate + ATP = beta-D-GlcNAc-(1-&gt;4)-Mur2Ac(oyl-L-Ala-gamma-D-O-P-Glu-L-Lys-D-Ala-D-Ala)-di-trans,octa-cis-undecaprenyl diphosphate + ADP. The enzyme catalyses beta-D-GlcNAc-(1-&gt;4)-Mur2Ac(oyl-L-Ala-gamma-D-O-P-Glu-L-Lys-D-Ala-D-Ala)-di-trans,octa-cis-undecaprenyl diphosphate + NH4(+) = beta-D-GlcNAc-(1-&gt;4)-Mur2Ac(oyl-L-Ala-D-isoglutaminyl-L-Lys-D-Ala-D-Ala)-di-trans,octa-cis-undecaprenyl diphosphate + phosphate + H(+). It functions in the pathway cell wall biogenesis; peptidoglycan biosynthesis. The lipid II isoglutaminyl synthase complex catalyzes the formation of alpha-D-isoglutamine in the cell wall lipid II stem peptide. The MurT subunit catalyzes the ATP-dependent amidation of D-glutamate residue of lipid II, converting it to an isoglutamine residue. This chain is Lipid II isoglutaminyl synthase (glutamine-hydrolyzing) subunit MurT, found in Staphylococcus aureus (strain COL).